The chain runs to 448 residues: UDP-N-acetylmuramoylalanine--D-glutamate ligase (448 aa).

116–122 contributes to the ATP binding site; sequence GSNAKST.

This sequence belongs to the MurCDEF family.

The protein resides in the cytoplasm. The enzyme catalyses UDP-N-acetyl-alpha-D-muramoyl-L-alanine + D-glutamate + ATP = UDP-N-acetyl-alpha-D-muramoyl-L-alanyl-D-glutamate + ADP + phosphate + H(+). The protein operates within cell wall biogenesis; peptidoglycan biosynthesis. Cell wall formation. Catalyzes the addition of glutamate to the nucleotide precursor UDP-N-acetylmuramoyl-L-alanine (UMA). This Pseudomonas syringae pv. tomato (strain ATCC BAA-871 / DC3000) protein is UDP-N-acetylmuramoylalanine--D-glutamate ligase.